The following is a 919-amino-acid chain: Translation initiation factor IF-2 (919 aa).

The segment covering 93–107 (MGKALPEEVPEKIAP) has biased composition (basic and acidic residues). Disordered stretches follow at residues 93–145 (MGKA…PAEP) and 158–279 (KIQP…RKGE). Residues 136–145 (LAPPEKPAEP) show a composition bias toward pro residues. Residues 158 to 171 (KIQPPEKFAEEPLK) are compositionally biased toward basic and acidic residues. A compositionally biased stretch (low complexity) spans 172 to 193 (KPAVIEPEKAAAAPKAVPGEAK). Composition is skewed to basic and acidic residues over residues 194–203 (PLPRTERVQE) and 256–279 (GAPK…RKGE). The 170-residue stretch at 420–589 (PRAPVVTIMG…LLQADVLELK (170 aa)) folds into the tr-type G domain. The tract at residues 429 to 436 (GHVDHGKT) is G1. GTP is bound at residue 429 to 436 (GHVDHGKT). Residues 454–458 (GITQA) are G2. The G3 stretch occupies residues 475 to 478 (DTPG). Residues 475–479 (DTPGH) and 529–532 (NKID) each bind GTP. A G4 region spans residues 529 to 532 (NKID). The segment at 565–567 (SAK) is G5.

The protein belongs to the TRAFAC class translation factor GTPase superfamily. Classic translation factor GTPase family. IF-2 subfamily.

Its subcellular location is the cytoplasm. Functionally, one of the essential components for the initiation of protein synthesis. Protects formylmethionyl-tRNA from spontaneous hydrolysis and promotes its binding to the 30S ribosomal subunits. Also involved in the hydrolysis of GTP during the formation of the 70S ribosomal complex. This chain is Translation initiation factor IF-2, found in Syntrophus aciditrophicus (strain SB).